Here is a 294-residue protein sequence, read N- to C-terminus: Elongation factor Ts (294 aa).

Positions 82–85 (TDFV) are involved in Mg(2+) ion dislocation from EF-Tu.

The protein belongs to the EF-Ts family.

Its subcellular location is the cytoplasm. In terms of biological role, associates with the EF-Tu.GDP complex and induces the exchange of GDP to GTP. It remains bound to the aminoacyl-tRNA.EF-Tu.GTP complex up to the GTP hydrolysis stage on the ribosome. The polypeptide is Elongation factor Ts (Psychrobacter arcticus (strain DSM 17307 / VKM B-2377 / 273-4)).